The primary structure comprises 310 residues: p-hydroxybenzoic acid efflux pump subunit AaeA (310 aa).

The chain crosses the membrane as a helical span at residues Ala-12–Tyr-32.

This sequence belongs to the membrane fusion protein (MFP) (TC 8.A.1) family.

Its subcellular location is the cell inner membrane. Its function is as follows. Forms an efflux pump with AaeB. This is p-hydroxybenzoic acid efflux pump subunit AaeA from Citrobacter koseri (strain ATCC BAA-895 / CDC 4225-83 / SGSC4696).